The primary structure comprises 346 residues: tRNA N6-adenosine threonylcarbamoyltransferase (346 aa).

Fe cation contacts are provided by H111 and H115. Residues 134–138, D167, G180, and N277 contribute to the substrate site; that span reads LVSGG. D305 provides a ligand contact to Fe cation.

It belongs to the KAE1 / TsaD family. It depends on Fe(2+) as a cofactor.

It is found in the cytoplasm. The enzyme catalyses L-threonylcarbamoyladenylate + adenosine(37) in tRNA = N(6)-L-threonylcarbamoyladenosine(37) in tRNA + AMP + H(+). In terms of biological role, required for the formation of a threonylcarbamoyl group on adenosine at position 37 (t(6)A37) in tRNAs that read codons beginning with adenine. Is involved in the transfer of the threonylcarbamoyl moiety of threonylcarbamoyl-AMP (TC-AMP) to the N6 group of A37, together with TsaE and TsaB. TsaD likely plays a direct catalytic role in this reaction. This Bordetella parapertussis (strain 12822 / ATCC BAA-587 / NCTC 13253) protein is tRNA N6-adenosine threonylcarbamoyltransferase.